A 429-amino-acid polypeptide reads, in one-letter code: 3-phosphoshikimate 1-carboxyvinyltransferase (429 aa).

K23, S24, and R28 together coordinate 3-phosphoshikimate. K23 is a phosphoenolpyruvate binding site. Phosphoenolpyruvate-binding residues include G95 and R123. The 3-phosphoshikimate site is built by S168, Q170, D316, and K343. Q170 lines the phosphoenolpyruvate pocket. D316 (proton acceptor) is an active-site residue. Residues R347 and R389 each contribute to the phosphoenolpyruvate site.

Belongs to the EPSP synthase family. Monomer.

The protein localises to the cytoplasm. It carries out the reaction 3-phosphoshikimate + phosphoenolpyruvate = 5-O-(1-carboxyvinyl)-3-phosphoshikimate + phosphate. Its pathway is metabolic intermediate biosynthesis; chorismate biosynthesis; chorismate from D-erythrose 4-phosphate and phosphoenolpyruvate: step 6/7. Its function is as follows. Catalyzes the transfer of the enolpyruvyl moiety of phosphoenolpyruvate (PEP) to the 5-hydroxyl of shikimate-3-phosphate (S3P) to produce enolpyruvyl shikimate-3-phosphate and inorganic phosphate. This chain is 3-phosphoshikimate 1-carboxyvinyltransferase, found in Oceanobacillus iheyensis (strain DSM 14371 / CIP 107618 / JCM 11309 / KCTC 3954 / HTE831).